The following is a 948-amino-acid chain: Puromycin-sensitive aminopeptidase (948 aa).

Residues Glu206 and 341–345 each bind substrate; that span reads GAMEN. Position 377 (His377) interacts with Zn(2+). Residue Glu378 is the Proton acceptor of the active site. Residues His381 and Glu400 each coordinate Zn(2+).

This sequence belongs to the peptidase M1 family. Zn(2+) is required as a cofactor. In terms of tissue distribution, expressed mainly in intestinal cells in the posterior part of the intestine and in amphid sensory neurons and nerve ring neurons. Expressed in neurons in the male tail. Expressed in mature spermatids (at protein level).

The protein resides in the cytoplasm. The protein localises to the cell cortex. It localises to the chromosome. Its subcellular location is the cytoskeleton. It is found in the spindle pole. The catalysed reaction is Release of an N-terminal amino acid, preferentially alanine, from a wide range of peptides, amides and arylamides.. Its activity is regulated as follows. Inhibited by chelating agent 1,10-phenanthroline, aminopeptidase inhibitors actinonin, amastatin, and leuhistin, and to a lesser extent by puromycin. In terms of biological role, aminopeptidase. Required for the exit from meiosis, probably upstream of cyclin cyb-3. Involved in the establishment of the anterior-posterior polarity at the embryonic 1-cell stage by regulating the dynamics of sperm-donated centrosomes. Plays a role in oocyte maturation. Required for embryonic development. The polypeptide is Puromycin-sensitive aminopeptidase (Caenorhabditis elegans).